The chain runs to 394 residues: Flap endonuclease 1-A (394 aa).

The N-domain stretch occupies residues 1–105; it reads MGIKGLTKLI…RELAKRFARR (105 aa). Asp34 is a Mg(2+) binding site. Arg71 serves as a coordination point for DNA. Mg(2+) contacts are provided by Asp87, Glu159, Glu161, Asp180, and Asp182. The interval 123-254 is I-domain; sequence DVEKYSKKTV…QTALKMIRQH (132 aa). Glu159 lines the DNA pocket. Positions 232 and 234 each coordinate DNA. Asp234 is a Mg(2+) binding site. An interaction with PCNA region spans residues 338-346; sequence SQGRLESFF. The segment at 343–394 is disordered; sequence ESFFGVSSSSSNKRKEAPDSEASAGKQVKTAAAVKPAKAASKKGPAKGGKKK. A compositionally biased stretch (low complexity) spans 368–381; sequence KQVKTAAAVKPAKA. The span at 382 to 394 shows a compositional bias: basic residues; sequence ASKKGPAKGGKKK.

The protein belongs to the XPG/RAD2 endonuclease family. FEN1 subfamily. In terms of assembly, interacts with PCNA. Three molecules of FEN1 bind to one PCNA trimer with each molecule binding to one PCNA monomer. PCNA stimulates the nuclease activity without altering cleavage specificity. The cofactor is Mg(2+). Phosphorylated. Phosphorylation upon DNA damage induces relocalization to the nuclear plasma.

The protein resides in the nucleus. Its subcellular location is the nucleolus. It is found in the nucleoplasm. It localises to the mitochondrion. Its function is as follows. Structure-specific nuclease with 5'-flap endonuclease and 5'-3' exonuclease activities involved in DNA replication and repair. During DNA replication, cleaves the 5'-overhanging flap structure that is generated by displacement synthesis when DNA polymerase encounters the 5'-end of a downstream Okazaki fragment. It enters the flap from the 5'-end and then tracks to cleave the flap base, leaving a nick for ligation. Also involved in the long patch base excision repair (LP-BER) pathway, by cleaving within the apurinic/apyrimidinic (AP) site-terminated flap. Acts as a genome stabilization factor that prevents flaps from equilibrating into structures that lead to duplications and deletions. Also possesses 5'-3' exonuclease activity on nicked or gapped double-stranded DNA, and exhibits RNase H activity. Also involved in replication and repair of rDNA and in repairing mitochondrial DNA. This is Flap endonuclease 1-A from Physcomitrium patens (Spreading-leaved earth moss).